The chain runs to 327 residues: MVSKKDKQIHSDHNPQDASPVEWAEIRHKLLAFQENIQSGSDIDARSDDPQMCGLYVSDIYEYLRELEVKPKLRPLHDYIEKIQEDITPSKRGVLVDWLVEVAEEFELVSETLYLTVSYIDRFLSLKMVNEHWLQLVGVSAMFIASKYEEKRRPKVEDFCYITANTYTKQDVLKMEEDILLALEFELGRPTTNTFLRRFIRVAQEDFKVPNLQLEPLCCYLSELSMLDYSCVKFVPSLLAASAVFLARFIILPNQHPWSQMLEECTKYKAADLQVCVEIMLDLYLSRSEGASKAVREKYKQHKFQYVAAIPVYQELPVTFWEDVVTI.

Belongs to the cyclin family. Cyclin AB subfamily.

The protein is Cyclin-A3-3 (CYCA3-3) of Arabidopsis thaliana (Mouse-ear cress).